Here is a 409-residue protein sequence, read N- to C-terminus: Putative competence-damage inducible protein (409 aa).

This sequence belongs to the CinA family.

In Clostridium botulinum (strain Kyoto / Type A2), this protein is Putative competence-damage inducible protein.